Consider the following 222-residue polypeptide: Disulfide bond formation protein D (222 aa).

The first 36 residues, methionine 1 to glycine 36, serve as a signal peptide directing secretion. Residues asparagine 37 to lysine 220 enclose the Thioredoxin domain. Residues cysteine 69 and cysteine 72 are joined by a disulfide bond.

It belongs to the thioredoxin family. DsbA subfamily.

It localises to the cell membrane. Its subcellular location is the membrane raft. Its function is as follows. Required for the stabilization, possibly via formation of a disulfide bond, of the obligatory competence protein ComGC. May be required for the stability of secreted proteins with disulfide bonds. Not required for sporulation. This Bacillus subtilis (strain 168) protein is Disulfide bond formation protein D (bdbD).